The sequence spans 184 residues: Inner membrane-spanning protein YciB (184 aa).

Helical transmembrane passes span 19-39 (LVGI…QLLI), 52-72 (LFMG…NQLE), 76-96 (WKVT…QYGF), 123-143 (LGWA…SQYL), and 151-171 (FKTF…GIYI).

Belongs to the YciB family.

Its subcellular location is the cell inner membrane. Plays a role in cell envelope biogenesis, maintenance of cell envelope integrity and membrane homeostasis. The sequence is that of Inner membrane-spanning protein YciB from Pasteurella multocida (strain Pm70).